A 567-amino-acid polypeptide reads, in one-letter code: Potassium-transporting ATPase potassium-binding subunit (567 aa).

A run of 11 helical transmembrane segments spans residues Phe-3–Leu-23, Leu-64–Val-84, Ala-136–Ile-156, Leu-179–Pro-199, Leu-254–Phe-274, Trp-285–Ala-305, Phe-330–Val-350, Phe-357–Val-376, Met-421–Leu-441, Ala-473–Gly-495, and Gly-527–Phe-547.

The protein belongs to the KdpA family. In terms of assembly, the system is composed of three essential subunits: KdpA, KdpB and KdpC.

The protein localises to the cell inner membrane. In terms of biological role, part of the high-affinity ATP-driven potassium transport (or Kdp) system, which catalyzes the hydrolysis of ATP coupled with the electrogenic transport of potassium into the cytoplasm. This subunit binds the periplasmic potassium ions and delivers the ions to the membrane domain of KdpB through an intramembrane tunnel. The protein is Potassium-transporting ATPase potassium-binding subunit of Rhodopseudomonas palustris (strain ATCC BAA-98 / CGA009).